The primary structure comprises 423 residues: MAGKRSGWSRAALLQLLLGVNLVVMPPTRARSLRFVTLLYRHGDRSPVKTYPKDPYQEEEWPQGFGQLTKEGMLQHWELGQALRQRYHGFLNTSYHRQEVYVRSTDFDRTLMSAEANLAGLFPPNGMQRFNPNISWQPIPVHTVPITEDRLLKFPLGPCPRYEQLQNETRQTPEYQNESSRNAQFLDMVANETGLTDLTLETVWNVYDTLFCEQTHGLRLPPWASPQTMQRLSRLKDFSFRFLFGIYQQAEKARLQGGVLLAQIRKNLTLMATTSQLPKLLVYSAHDTTLVALQMALDVYNGEQAPYASCHIFELYQEDSGNFSVEMYFRNESDKAPWPLSLPGCPHRCPLQDFLRLTEPVVPKDWQQECQLASGPADTEVIVALAVCGSILFLLIVLLLTVLFRMQAQPPGYRHVADGEDHA.

The N-terminal stretch at 1-30 (MAGKRSGWSRAALLQLLLGVNLVVMPPTRA) is a signal peptide. At 31–380 (RSLRFVTLLY…QLASGPADTE (350 aa)) the chain is on the lumenal side. The Nucleophile role is filled by His42. Asn92, Asn133, Asn167, Asn177, Asn191, and Asn267 each carry an N-linked (GlcNAc...) asparagine glycan. 3 cysteine pairs are disulfide-bonded: Cys159–Cys370, Cys212–Cys310, and Cys345–Cys349. The active-site Proton donor is Asp287. N-linked (GlcNAc...) asparagine glycans are attached at residues Asn322 and Asn331. Residues 381 to 401 (VIVALAVCGSILFLLIVLLLT) traverse the membrane as a helical segment. The Cytoplasmic segment spans residues 402-423 (VLFRMQAQPPGYRHVADGEDHA).

This sequence belongs to the histidine acid phosphatase family. Post-translationally, the membrane-bound form is converted to the soluble form by sequential proteolytic processing. First, the C-terminal cytoplasmic tail is removed. Cleavage by a lysosomal protease releases the soluble form in the lysosome lumen. In terms of processing, N-glycosylated. The intermediates formed during enzymatic deglycosylation suggest that all eight predicted N-glycosylation sites are used.

It is found in the lysosome membrane. The protein resides in the lysosome lumen. It catalyses the reaction a phosphate monoester + H2O = an alcohol + phosphate. The polypeptide is Lysosomal acid phosphatase (ACP2) (Homo sapiens (Human)).